Here is a 377-residue protein sequence, read N- to C-terminus: UDP-N-acetylglucosamine 2-epimerase (377 aa).

Residue H212 is part of the active site.

Belongs to the UDP-N-acetylglucosamine 2-epimerase family. As to quaternary structure, homodimer.

The catalysed reaction is UDP-N-acetyl-alpha-D-glucosamine + H2O = aldehydo-N-acetyl-D-mannosamine + UDP + H(+). Catalyzes the conversion of UDP-N-acetylglucosamine (UDP-GlcNAc) to UDP and N-acetyl-D-mannosamine (ManNAc). This chain is UDP-N-acetylglucosamine 2-epimerase (siaA), found in Neisseria meningitidis serogroup B (strain ATCC BAA-335 / MC58).